Here is a 260-residue protein sequence, read N- to C-terminus: MICOS complex subunit mic25-a (260 aa).

Residues 1–92 (MGGSESTGRK…KPTARGVGHQ (92 aa)) are disordered. Residue G2 is the site of N-myristoyl glycine attachment. The segment covering 28–39 (RLSDEVVNRMKD) has biased composition (basic and acidic residues). The segment covering 48–64 (STSTASGTTSGPTTFPS) has biased composition (low complexity). A coiled-coil region spans residues 94–187 (AEEDLYRRYE…LNSIEKKNLE (94 aa)). The CHCH domain maps to 213–255 (DPVCMDLQSNILKCYAENKQERLNCSDLAKEYGKCVSAAQKNL). 2 short sequence motifs (cx9C motif) span residues 216 to 226 (CMDLQSNILKC) and 237 to 247 (CSDLAKEYGKC). 2 disulfide bridges follow: C216/C247 and C226/C237.

It belongs to the MICOS complex subunit Mic19 family. Metazoan Mic25 subfamily. Component of the mitochondrial contact site and cristae organizing system (MICOS) complex (also known as MINOS or MitOS complex).

The protein resides in the mitochondrion inner membrane. Functionally, component of the MICOS complex, a large protein complex of the mitochondrial inner membrane that plays crucial roles in the maintenance of crista junctions, inner membrane architecture, and formation of contact sites to the outer membrane. In Xenopus laevis (African clawed frog), this protein is MICOS complex subunit mic25-a (chchd6-a).